The chain runs to 120 residues: Large ribosomal subunit protein bL36m (120 aa).

It belongs to the bacterial ribosomal protein bL36 family. In terms of assembly, component of the mitochondrial ribosome large subunit (39S) which comprises a 16S rRNA and about 50 distinct proteins.

The protein resides in the mitochondrion. This chain is Large ribosomal subunit protein bL36m (mrpl36), found in Osmerus mordax (Rainbow smelt).